Consider the following 129-residue polypeptide: Fluoride-specific ion channel FluC (129 aa).

4 helical membrane passes run 4-24 (LFVA…SGLI), 32-52 (FPWG…AFAT), 69-89 (FFMV…LQTL), and 105-125 (VLSV…AVLI). Gly-76 and Thr-79 together coordinate Na(+).

It belongs to the fluoride channel Fluc/FEX (TC 1.A.43) family.

Its subcellular location is the cell inner membrane. It carries out the reaction fluoride(in) = fluoride(out). Na(+) is not transported, but it plays an essential structural role and its presence is essential for fluoride channel function. Fluoride-specific ion channel. Important for reducing fluoride concentration in the cell, thus reducing its toxicity. This is Fluoride-specific ion channel FluC from Rhodospirillum rubrum (strain ATCC 11170 / ATH 1.1.1 / DSM 467 / LMG 4362 / NCIMB 8255 / S1).